The sequence spans 491 residues: Ketol-acid reductoisomerase (NADP(+)) (491 aa).

In terms of domain architecture, KARI N-terminal Rossmann spans 15–208 (AQLGKCRFMA…GGHRAGVLES (194 aa)). NADP(+)-binding positions include 45 to 48 (CGAQ), Arg68, Arg76, Ser78, and 108 to 110 (DKQ). His132 is a catalytic residue. Gly158 lines the NADP(+) pocket. KARI C-terminal knotted domains follow at residues 209 to 344 (SFVA…TASQ) and 345 to 484 (FDGK…MKDM). 4 residues coordinate Mg(2+): Asp217, Glu221, Glu389, and Glu393. Ser414 provides a ligand contact to substrate.

Belongs to the ketol-acid reductoisomerase family. Mg(2+) serves as cofactor.

It carries out the reaction (2R)-2,3-dihydroxy-3-methylbutanoate + NADP(+) = (2S)-2-acetolactate + NADPH + H(+). The enzyme catalyses (2R,3R)-2,3-dihydroxy-3-methylpentanoate + NADP(+) = (S)-2-ethyl-2-hydroxy-3-oxobutanoate + NADPH + H(+). The protein operates within amino-acid biosynthesis; L-isoleucine biosynthesis; L-isoleucine from 2-oxobutanoate: step 2/4. Its pathway is amino-acid biosynthesis; L-valine biosynthesis; L-valine from pyruvate: step 2/4. In terms of biological role, involved in the biosynthesis of branched-chain amino acids (BCAA). Catalyzes an alkyl-migration followed by a ketol-acid reduction of (S)-2-acetolactate (S2AL) to yield (R)-2,3-dihydroxy-isovalerate. In the isomerase reaction, S2AL is rearranged via a Mg-dependent methyl migration to produce 3-hydroxy-3-methyl-2-ketobutyrate (HMKB). In the reductase reaction, this 2-ketoacid undergoes a metal-dependent reduction by NADPH to yield (R)-2,3-dihydroxy-isovalerate. The sequence is that of Ketol-acid reductoisomerase (NADP(+)) from Enterobacter sp. (strain 638).